The chain runs to 306 residues: tRNA pseudouridine synthase B (306 aa).

Asp47 serves as the catalytic Nucleophile.

Belongs to the pseudouridine synthase TruB family. Type 1 subfamily.

It catalyses the reaction uridine(55) in tRNA = pseudouridine(55) in tRNA. Responsible for synthesis of pseudouridine from uracil-55 in the psi GC loop of transfer RNAs. This Neisseria gonorrhoeae (strain ATCC 700825 / FA 1090) protein is tRNA pseudouridine synthase B.